We begin with the raw amino-acid sequence, 370 residues long: Calcium/calmodulin-dependent protein kinase type 1 (370 aa).

Residues 20-276 (YDFRDVLGTG…CEQALQHPWI (257 aa)) form the Protein kinase domain. Residues 26–34 (LGTGAFSEV) and lysine 49 each bind ATP. A Glycyl lysine isopeptide (Lys-Gly) (interchain with G-Cter in ubiquitin) cross-link involves residue lysine 59. Aspartate 141 acts as the Proton acceptor in catalysis. Threonine 177 is subject to Phosphothreonine; by CaMKK1 and CaMKK2. An autoinhibitory domain region spans residues 276-316 (IAGDTALDKNIHQSVSEQIKKNFAKSKWKQAFNATAVVRHM). The segment at 296–317 (KNFAKSKWKQAFNATAVVRHMR) is calmodulin-binding. Positions 315 to 321 (HMRKLQL) match the Nuclear export signal motif. At serine 363 the chain carries Phosphoserine.

This sequence belongs to the protein kinase superfamily. CAMK Ser/Thr protein kinase family. CaMK subfamily. As to quaternary structure, monomer. Interacts with XPO1. Interacts with MARK2, ARHGEF7/BETAPIX and GIT1. Phosphorylated by CaMKK1 and CaMKK2 on Thr-177. In terms of processing, polybiquitinated by the E3 ubiquitin-protein ligase complex SCF(FBXL12), leading to proteasomal degradation. As to expression, widely expressed. Expressed in cells of the zona glomerulosa of the adrenal cortex.

Its subcellular location is the cytoplasm. The protein localises to the nucleus. The catalysed reaction is L-seryl-[protein] + ATP = O-phospho-L-seryl-[protein] + ADP + H(+). The enzyme catalyses L-threonyl-[protein] + ATP = O-phospho-L-threonyl-[protein] + ADP + H(+). Activated by Ca(2+)/calmodulin. Binding of calmodulin results in conformational change that relieves intrasteric autoinhibition and allows phosphorylation of Thr-177 within the activation loop by CaMKK1 or CaMKK2. Phosphorylation of Thr-177 results in several fold increase in total activity. Unlike CaMK4, is unable to exhibit autonomous activity after Ca(2+)/calmodulin activation. Functionally, calcium/calmodulin-dependent protein kinase that operates in the calcium-triggered CaMKK-CaMK1 signaling cascade and, upon calcium influx, regulates transcription activators activity, cell cycle, hormone production, cell differentiation, actin filament organization and neurite outgrowth. Recognizes the substrate consensus sequence [MVLIF]-x-R-x(2)-[ST]-x(3)-[MVLIF]. Regulates axonal extension and growth cone motility in hippocampal and cerebellar nerve cells. Upon NMDA receptor-mediated Ca(2+) elevation, promotes dendritic growth in hippocampal neurons and is essential in synapses for full long-term potentiation (LTP) and ERK2-dependent translational activation. Downstream of NMDA receptors, promotes the formation of spines and synapses in hippocampal neurons by phosphorylating ARHGEF7/BETAPIX on 'Ser-694', which results in the enhancement of ARHGEF7 activity and activation of RAC1. Promotes neuronal differentiation and neurite outgrowth by activation and phosphorylation of MARK2 on 'Ser-91', 'Ser-92', 'Ser-93' and 'Ser-294'. Promotes nuclear export of HDAC5 and binding to 14-3-3 by phosphorylation of 'Ser-259' and 'Ser-498' in the regulation of muscle cell differentiation. Regulates NUMB-mediated endocytosis by phosphorylation of NUMB on 'Ser-276' and 'Ser-295'. Involved in the regulation of basal and estrogen-stimulated migration of medulloblastoma cells through ARHGEF7/BETAPIX phosphorylation. Is required for proper activation of cyclin-D1/CDK4 complex during G1 progression in diploid fibroblasts. Plays a role in K(+) and ANG2-mediated regulation of the aldosterone synthase (CYP11B2) to produce aldosterone in the adrenal cortex. Phosphorylates EIF4G3/eIF4GII. In vitro phosphorylates CREB1, ATF1, CFTR, MYL9 and SYN1/synapsin I. The polypeptide is Calcium/calmodulin-dependent protein kinase type 1 (CAMK1) (Homo sapiens (Human)).